The following is an 862-amino-acid chain: Leucine--tRNA ligase (862 aa).

Positions proline 51–histidine 61 match the 'HIGH' region motif. The 'KMSKS' region signature appears at lysine 624 to serine 628. An ATP-binding site is contributed by lysine 627.

It belongs to the class-I aminoacyl-tRNA synthetase family.

The protein resides in the cytoplasm. It carries out the reaction tRNA(Leu) + L-leucine + ATP = L-leucyl-tRNA(Leu) + AMP + diphosphate. This chain is Leucine--tRNA ligase, found in Prochlorococcus marinus (strain NATL1A).